We begin with the raw amino-acid sequence, 295 residues long: Pantothenate synthetase (295 aa).

His37 functions as the Proton donor in the catalytic mechanism. Gln61 is a (R)-pantoate binding site. Position 61 (Gln61) interacts with beta-alanine. 154–157 (GRKD) is a binding site for ATP. Gln160 serves as a coordination point for (R)-pantoate. ATP is bound by residues Val183 and 191–194 (QSSR).

The protein belongs to the pantothenate synthetase family. Homodimer.

It localises to the cytoplasm. It carries out the reaction (R)-pantoate + beta-alanine + ATP = (R)-pantothenate + AMP + diphosphate + H(+). It functions in the pathway cofactor biosynthesis; (R)-pantothenate biosynthesis; (R)-pantothenate from (R)-pantoate and beta-alanine: step 1/1. Functionally, catalyzes the condensation of pantoate with beta-alanine in an ATP-dependent reaction via a pantoyl-adenylate intermediate. The protein is Pantothenate synthetase of Salinibacter ruber (strain DSM 13855 / M31).